Consider the following 267-residue polypeptide: Levodione reductase (267 aa).

Residue 17–42 participates in NAD(+) binding; the sequence is LITGGGSGLGRATAVRLAAEGAKLSL. Serine 152 serves as a coordination point for substrate. Catalysis depends on tyrosine 165, which acts as the Proton acceptor.

This sequence belongs to the short-chain dehydrogenases/reductases (SDR) family.

The enzyme catalyses (4R)-hydroxy-(6R)-2,2,6-trimethylcyclohexanone + NAD(+) = (6R)-2,2,6-trimethyl-1,4-cyclohexanedione + NADH + H(+). Strongly activated by monovalent cations, such as K(+), Na(+), and NH4(+). In terms of biological role, catalyzes the regio- and stereoselective reversible NAD-dependent reduction of (6R)-2,2,6-trimethyl-1,4-cyclohexanedione (levodione) to (4R,6R)-4-hydroxy-2,2,6-trimethylcyclohexanone (actinol). The chain is Levodione reductase (lvr) from Leifsonia aquatica (Corynebacterium aquaticum).